Reading from the N-terminus, the 398-residue chain is Metalloprotease MmpA (398 aa).

A Zn(2+)-binding site is contributed by His22. The active site involves Glu23. His26 is a binding site for Zn(2+). Transmembrane regions (helical) follow at residues 117 to 139 (FIAVAGPMANFILAILVFAVILV), 316 to 338 (QFWLIASLSVSIGFMNLLPIPVL), and 362 to 381 (AAGFRAGLALILGFMLFAAW). Positions 130–203 (AILVFAVILV…MPIDFAVERD (74 aa)) constitute a PDZ domain.

This sequence belongs to the peptidase M50B family. The cofactor is Zn(2+).

The protein resides in the cell inner membrane. In terms of biological role, involved in the regulated intramembrane proteolysis (RIP) of the short isoform of PodJ protein (PodJS), during the swarmer-to-stalked transition. The cleavage occurs near or within the single transmembrane of PodJS thereby releasing the N-terminal segment into the cytoplasm for subsequent degradation. It contributes to preserve asymmetry in the next cell cycle through sequential degradation. The sequence is that of Metalloprotease MmpA (mmpA) from Caulobacter vibrioides (strain ATCC 19089 / CIP 103742 / CB 15) (Caulobacter crescentus).